Consider the following 271-residue polypeptide: Ferric vulnibactin reductase VuuB (271 aa).

The 124-residue stretch at 8–131 (VYPMLLDFVR…IGPAGPDPLI (124 aa)) folds into the FAD-binding FR-type domain.

It belongs to the SIP oxidoreductase family. As to quaternary structure, monomer. Requires FAD as cofactor.

It localises to the cytoplasm. It carries out the reaction 2 a Fe(II)-siderophore + NAD(+) + H(+) = 2 a Fe(III)-siderophore + NADH. Functionally, ferric-siderophore reductase involved in iron removal from the siderophores after their transport into the cell. Acts as a major ferric-vulnibactin reductase catalyzing the reduction of Fe(3+)-vulnibactin, a catecholate siderophore synthesized by V.vulnificus. Catalyzes reduction of Fe(3+)-aerobactin, a citrate-hydroxamate siderophore produced by other bacteria, in the absence of IutB. Catalyzes reduction of Fe(3+)-vibriobactin in vitro. No activity with ferrioxamine B or Fe(3+)-enterobactin. Catalyzes reduction of ferric chelating compounds Fe(3+)-nitrilotriacetic acid (NTA), Fe(3+)-citrate and Fe(3+)-EDTA as well as non-complexed FeCl3 in the presence of NADH as its electron donor and FAD as its cofactor in vitro. Highest activity with Fe(3+)-NTA as electron acceptor. In Vibrio vulnificus, this protein is Ferric vulnibactin reductase VuuB.